The chain runs to 289 residues: 4-diphosphocytidyl-2-C-methyl-D-erythritol kinase (289 aa).

The active site involves lysine 10. ATP is bound at residue 94 to 104 (PVAAGLAGGSS). Aspartate 136 is a catalytic residue.

This sequence belongs to the GHMP kinase family. IspE subfamily.

The enzyme catalyses 4-CDP-2-C-methyl-D-erythritol + ATP = 4-CDP-2-C-methyl-D-erythritol 2-phosphate + ADP + H(+). The protein operates within isoprenoid biosynthesis; isopentenyl diphosphate biosynthesis via DXP pathway; isopentenyl diphosphate from 1-deoxy-D-xylulose 5-phosphate: step 3/6. Its function is as follows. Catalyzes the phosphorylation of the position 2 hydroxy group of 4-diphosphocytidyl-2C-methyl-D-erythritol. The chain is 4-diphosphocytidyl-2-C-methyl-D-erythritol kinase from Bacillus pumilus (strain SAFR-032).